A 43-amino-acid chain; its full sequence is Defensin (43 aa).

Intrachain disulfides connect Cys3–Cys34, Cys20–Cys39, and Cys24–Cys41.

The protein localises to the secreted. Antibacterial peptide. Affects Gram-negative bacteria including methicillin-resistant Staphylococcus aureus. This chain is Defensin, found in Trypoxylus dichotomus (Japanese rhinoceros beetle).